A 571-amino-acid polypeptide reads, in one-letter code: Proline--tRNA ligase (571 aa).

The protein belongs to the class-II aminoacyl-tRNA synthetase family. ProS type 1 subfamily. In terms of assembly, homodimer.

Its subcellular location is the cytoplasm. The enzyme catalyses tRNA(Pro) + L-proline + ATP = L-prolyl-tRNA(Pro) + AMP + diphosphate. Its function is as follows. Catalyzes the attachment of proline to tRNA(Pro) in a two-step reaction: proline is first activated by ATP to form Pro-AMP and then transferred to the acceptor end of tRNA(Pro). As ProRS can inadvertently accommodate and process non-cognate amino acids such as alanine and cysteine, to avoid such errors it has two additional distinct editing activities against alanine. One activity is designated as 'pretransfer' editing and involves the tRNA(Pro)-independent hydrolysis of activated Ala-AMP. The other activity is designated 'posttransfer' editing and involves deacylation of mischarged Ala-tRNA(Pro). The misacylated Cys-tRNA(Pro) is not edited by ProRS. The protein is Proline--tRNA ligase of Shewanella baltica (strain OS195).